The following is a 308-amino-acid chain: Aspartate carbamoyltransferase catalytic subunit (308 aa).

Residues Arg-49 and Thr-50 each contribute to the carbamoyl phosphate site. L-aspartate is bound at residue Lys-77. Carbamoyl phosphate-binding residues include Arg-99, His-127, and Gln-130. Arg-160 and Arg-211 together coordinate L-aspartate. The carbamoyl phosphate site is built by Ala-252 and Pro-253.

The protein belongs to the aspartate/ornithine carbamoyltransferase superfamily. ATCase family. In terms of assembly, heterododecamer (2C3:3R2) of six catalytic PyrB chains organized as two trimers (C3), and six regulatory PyrI chains organized as three dimers (R2).

It catalyses the reaction carbamoyl phosphate + L-aspartate = N-carbamoyl-L-aspartate + phosphate + H(+). The protein operates within pyrimidine metabolism; UMP biosynthesis via de novo pathway; (S)-dihydroorotate from bicarbonate: step 2/3. Its function is as follows. Catalyzes the condensation of carbamoyl phosphate and aspartate to form carbamoyl aspartate and inorganic phosphate, the committed step in the de novo pyrimidine nucleotide biosynthesis pathway. This chain is Aspartate carbamoyltransferase catalytic subunit, found in Geobacillus thermodenitrificans (strain NG80-2).